A 172-amino-acid polypeptide reads, in one-letter code: MAEQKSSYGYEELLACGRGEMFGPGNAQLPLPPMLMIHRITEISETGGAFDKGYIRAEYDVRPDDWYFPCHFQGNPIMPGCLGLDGMWQLTGFFLGWLGEPGRGMALSTGEVKFKGMVRPHTKLLEYGIDFKRVMRGRLVLGTADGCLKADGELIYQATDLRVGLSKEGSAQ.

The active site involves histidine 71.

Belongs to the thioester dehydratase family. FabA subfamily. In terms of assembly, homodimer.

The protein localises to the cytoplasm. The catalysed reaction is a (3R)-hydroxyacyl-[ACP] = a (2E)-enoyl-[ACP] + H2O. It catalyses the reaction (3R)-hydroxydecanoyl-[ACP] = (2E)-decenoyl-[ACP] + H2O. It carries out the reaction (2E)-decenoyl-[ACP] = (3Z)-decenoyl-[ACP]. The protein operates within lipid metabolism; fatty acid biosynthesis. Its function is as follows. Necessary for the introduction of cis unsaturation into fatty acids. Catalyzes the dehydration of (3R)-3-hydroxydecanoyl-ACP to E-(2)-decenoyl-ACP and then its isomerization to Z-(3)-decenoyl-ACP. Can catalyze the dehydratase reaction for beta-hydroxyacyl-ACPs with saturated chain lengths up to 16:0, being most active on intermediate chain length. This chain is 3-hydroxydecanoyl-[acyl-carrier-protein] dehydratase, found in Brucella ovis (strain ATCC 25840 / 63/290 / NCTC 10512).